Consider the following 196-residue polypeptide: Proteasome subunit beta 1 (196 aa).

Residues 1–6 (MEKKTG) constitute a propeptide, removed in mature form; by autocatalysis. The active-site Nucleophile is the Thr-7.

Belongs to the peptidase T1B family. In terms of assembly, the 20S proteasome core is composed of 14 alpha and 14 beta subunits that assemble into four stacked heptameric rings, resulting in a barrel-shaped structure. The two inner rings, each composed of seven catalytic beta subunits, are sandwiched by two outer rings, each composed of seven alpha subunits. The catalytic chamber with the active sites is on the inside of the barrel. Has a gated structure, the ends of the cylinder being occluded by the N-termini of the alpha-subunits. Is capped at one or both ends by the proteasome regulatory ATPase, PAN.

Its subcellular location is the cytoplasm. The enzyme catalyses Cleavage of peptide bonds with very broad specificity.. Its activity is regulated as follows. The formation of the proteasomal ATPase PAN-20S proteasome complex, via the docking of the C-termini of PAN into the intersubunit pockets in the alpha-rings, triggers opening of the gate for substrate entry. Interconversion between the open-gate and close-gate conformations leads to a dynamic regulation of the 20S proteasome proteolysis activity. Functionally, component of the proteasome core, a large protease complex with broad specificity involved in protein degradation. This is Proteasome subunit beta 1 from Pyrococcus furiosus (strain ATCC 43587 / DSM 3638 / JCM 8422 / Vc1).